The chain runs to 448 residues: Phosphoglucosamine mutase (448 aa).

Ser100 serves as the catalytic Phosphoserine intermediate. Residues Ser100, Asp240, Asp242, and Asp244 each contribute to the Mg(2+) site. Residue Ser100 is modified to Phosphoserine.

This sequence belongs to the phosphohexose mutase family. It depends on Mg(2+) as a cofactor. Activated by phosphorylation.

It carries out the reaction alpha-D-glucosamine 1-phosphate = D-glucosamine 6-phosphate. In terms of biological role, catalyzes the conversion of glucosamine-6-phosphate to glucosamine-1-phosphate. This chain is Phosphoglucosamine mutase, found in Bacillus licheniformis (strain ATCC 14580 / DSM 13 / JCM 2505 / CCUG 7422 / NBRC 12200 / NCIMB 9375 / NCTC 10341 / NRRL NRS-1264 / Gibson 46).